The primary structure comprises 123 residues: Ribosome-binding factor A (123 aa).

The protein belongs to the RbfA family. In terms of assembly, monomer. Binds 30S ribosomal subunits, but not 50S ribosomal subunits or 70S ribosomes.

It is found in the cytoplasm. One of several proteins that assist in the late maturation steps of the functional core of the 30S ribosomal subunit. Associates with free 30S ribosomal subunits (but not with 30S subunits that are part of 70S ribosomes or polysomes). Required for efficient processing of 16S rRNA. May interact with the 5'-terminal helix region of 16S rRNA. The sequence is that of Ribosome-binding factor A from Acetivibrio thermocellus (strain ATCC 27405 / DSM 1237 / JCM 9322 / NBRC 103400 / NCIMB 10682 / NRRL B-4536 / VPI 7372) (Clostridium thermocellum).